The sequence spans 1001 residues: Serine/threonine-protein kinase TAO1 (1001 aa).

Ser-9 is modified (phosphoserine). The Protein kinase domain occupies 28–281; that stretch reads FTDLREIGHG…SEELLKHMFV (254 aa). ATP-binding positions include 34–42 and Lys-57; that span reads IGHGSFGAV. The active-site Proton acceptor is the Asp-151. Disordered stretches follow at residues 324 to 380 and 404 to 433; these read PAVE…DKSE and ENYQEEGDPRTRASDPQSPPQVSRHKSHYR. Low complexity predominate over residues 350-370; sequence SNQSIPSMSISASSQSSSVNS. Ser-421 and Ser-445 each carry phosphoserine. Residues 458-651 adopt a coiled-coil conformation; sequence SELREQMSGY…QTQKDLEHAM (194 aa). A disordered region spans residues 567 to 587; that stretch reads KEELNENQSTPKKEKQEWLSK. Residues 577-587 are compositionally biased toward basic and acidic residues; that stretch reads PKKEKQEWLSK. Thr-669 is modified (phosphothreonine). Residues 754-877 adopt a coiled-coil conformation; it reads KAVLKRLKEE…LERQAREIEA (124 aa). Positions 905–1001 are disordered; it reads PGASSWSHNP…ISNGSHMSYT (97 aa). Over residues 921 to 930 the composition is skewed to low complexity; the sequence is HWGHPMGGTP. Position 965 is a phosphoserine (Ser-965). The span at 975 to 1001 shows a compositional bias: polar residues; sequence GGRTEQGMSRSTSVTSQISNGSHMSYT.

This sequence belongs to the protein kinase superfamily. STE Ser/Thr protein kinase family. STE20 subfamily. As to quaternary structure, self-associates. Interacts with MAP2K3. Interacts with SPRED1. Interacts with TESK1; the interaction inhibits TAOK1 kinase activity. Interacts with MAP3K7. In terms of processing, proteolytically processed by caspase-3 (CASP3). Autophosphorylated. Phosphorylated by ATM in response to DNA damage. Phosphorylated by LRRK2.

The protein resides in the cytoplasm. The catalysed reaction is L-seryl-[protein] + ATP = O-phospho-L-seryl-[protein] + ADP + H(+). The enzyme catalyses L-threonyl-[protein] + ATP = O-phospho-L-threonyl-[protein] + ADP + H(+). Its activity is regulated as follows. Serine/threonine-protein kinase activity is inhibited by SPRED1. Serine/threonine-protein kinase involved in various processes such as p38/MAPK14 stress-activated MAPK cascade, DNA damage response and regulation of cytoskeleton stability. Phosphorylates MAP2K3, MAP2K6 and MARK2. Acts as an activator of the p38/MAPK14 stress-activated MAPK cascade by mediating phosphorylation and subsequent activation of the upstream MAP2K3 and MAP2K6 kinases. Involved in G-protein coupled receptor signaling to p38/MAPK14. In response to DNA damage, involved in the G2/M transition DNA damage checkpoint by activating the p38/MAPK14 stress-activated MAPK cascade, probably by mediating phosphorylation of MAP2K3 and MAP2K6. Acts as a regulator of cytoskeleton stability by phosphorylating 'Thr-208' of MARK2, leading to activate MARK2 kinase activity and subsequent phosphorylation and detachment of MAPT/TAU from microtubules. Also acts as a regulator of apoptosis: regulates apoptotic morphological changes, including cell contraction, membrane blebbing and apoptotic bodies formation via activation of the MAPK8/JNK cascade. During fetal development, it plays an essential role in the regulation of neuronal differentiation and migration to the cortical plate. The chain is Serine/threonine-protein kinase TAO1 (Taok1) from Mus musculus (Mouse).